The chain runs to 533 residues: Probable RNA-binding protein 46 (533 aa).

3 consecutive RRM domains span residues 61–139, 141–223, and 236–308; these read CEVF…VSLD, CRLF…WADP, and KVLY…LAKP.

In terms of assembly, interacts with YTHDC2, MEIOC, MOV10, CNOT6L, DDX4, UPF1 and PABPC1.

The protein localises to the cytoplasm. In terms of biological role, essential for male and female fertility, playing a crucial role in regulating germ cell development by ensuring the proper progression of meiosis prophase I. Regulates mitotic-to-meiotic transition in spermatogenesis by forming a complex with MEIOC and YTHDC2 which recognizes and down-regulates mitotic transcripts for a successful meiotic entry. Required for normal synaptonemal complex formation during meiosis, binding meiotic cohesin subunit mRNAs containing GCCUAU/GUUCGA motifs in their 3'UTRs regions and positively regulating their translation. Required for spermatogonial differentiation in both developing and adult testis. This chain is Probable RNA-binding protein 46 (RBM46), found in Homo sapiens (Human).